The primary structure comprises 688 residues: Glycine--tRNA ligase beta subunit (688 aa).

Belongs to the class-II aminoacyl-tRNA synthetase family. Tetramer of two alpha and two beta subunits.

It is found in the cytoplasm. The enzyme catalyses tRNA(Gly) + glycine + ATP = glycyl-tRNA(Gly) + AMP + diphosphate. The polypeptide is Glycine--tRNA ligase beta subunit (Colwellia psychrerythraea (strain 34H / ATCC BAA-681) (Vibrio psychroerythus)).